Reading from the N-terminus, the 301-residue chain is Tyrosine recombinase XerC (301 aa).

The region spanning 2 to 84 (TNTQFYITNF…TLRSFFSYLY (83 aa)) is the Core-binding (CB) domain. The Tyr recombinase domain occupies 105-291 (ALPKFLTVDD…DLKHLIEVYD (187 aa)). Active-site residues include R145, K169, H243, R246, and H269. Y278 functions as the O-(3'-phospho-DNA)-tyrosine intermediate in the catalytic mechanism.

This sequence belongs to the 'phage' integrase family. XerC subfamily. In terms of assembly, forms a cyclic heterotetrameric complex composed of two molecules of XerC and two molecules of XerD.

Its subcellular location is the cytoplasm. Functionally, site-specific tyrosine recombinase, which acts by catalyzing the cutting and rejoining of the recombining DNA molecules. The XerC-XerD complex is essential to convert dimers of the bacterial chromosome into monomers to permit their segregation at cell division. It also contributes to the segregational stability of plasmids. The protein is Tyrosine recombinase XerC of Thermodesulfovibrio yellowstonii (strain ATCC 51303 / DSM 11347 / YP87).